The sequence spans 138 residues: Small ribosomal subunit protein uS8 (138 aa).

It belongs to the universal ribosomal protein uS8 family. As to quaternary structure, part of the 30S ribosomal subunit. Contacts proteins S5 and S12.

Its function is as follows. One of the primary rRNA binding proteins, it binds directly to 16S rRNA central domain where it helps coordinate assembly of the platform of the 30S subunit. The sequence is that of Small ribosomal subunit protein uS8 from Thermus aquaticus.